Here is a 93-residue protein sequence, read N- to C-terminus: Small ribosomal subunit protein uS19 (93 aa).

The protein belongs to the universal ribosomal protein uS19 family.

Its function is as follows. Protein S19 forms a complex with S13 that binds strongly to the 16S ribosomal RNA. The chain is Small ribosomal subunit protein uS19 from Saccharopolyspora erythraea (strain ATCC 11635 / DSM 40517 / JCM 4748 / NBRC 13426 / NCIMB 8594 / NRRL 2338).